A 432-amino-acid chain; its full sequence is UDP-N-acetylglucosamine 1-carboxyvinyltransferase (432 aa).

22-23 (KN) provides a ligand contact to phosphoenolpyruvate. Arginine 102 contributes to the UDP-N-acetyl-alpha-D-glucosamine binding site. Residue cysteine 126 is the Proton donor of the active site. Cysteine 126 carries the post-translational modification 2-(S-cysteinyl)pyruvic acid O-phosphothioketal. UDP-N-acetyl-alpha-D-glucosamine-binding positions include 131–135 (RPVDL), aspartate 317, and isoleucine 339.

It belongs to the EPSP synthase family. MurA subfamily.

It localises to the cytoplasm. The catalysed reaction is phosphoenolpyruvate + UDP-N-acetyl-alpha-D-glucosamine = UDP-N-acetyl-3-O-(1-carboxyvinyl)-alpha-D-glucosamine + phosphate. Its pathway is cell wall biogenesis; peptidoglycan biosynthesis. Cell wall formation. Adds enolpyruvyl to UDP-N-acetylglucosamine. The polypeptide is UDP-N-acetylglucosamine 1-carboxyvinyltransferase (Rhodospirillum centenum (strain ATCC 51521 / SW)).